The following is a 603-amino-acid chain: Serine/threonine-protein kinase HAL4/SAT4 (603 aa).

Polar residues-rich tracts occupy residues 1 to 15, 30 to 60, and 68 to 85; these read MTGM…PQQT, RSGS…SASK, and TPTT…NTAG. Disordered regions lie at residues 1–86, 150–171, and 267–301; these read MTGM…TAGV, LSPK…PTPT, and DKYP…THNI. Over residues 159 to 171 the composition is skewed to low complexity; it reads NSNTAITPAPTPT. A compositionally biased stretch (basic and acidic residues) spans 282 to 296; sequence PERDIYRSDQKDSKN. The Protein kinase domain maps to 316–590; sequence GRCQEVLGKG…GKQILNSEWG (275 aa). Residues 322-330 and K353 each bind ATP; that span reads LGKGAFGVV. Catalysis depends on D449, which acts as the Proton acceptor.

This sequence belongs to the protein kinase superfamily. Ser/Thr protein kinase family.

The catalysed reaction is L-seryl-[protein] + ATP = O-phospho-L-seryl-[protein] + ADP + H(+). It catalyses the reaction L-threonyl-[protein] + ATP = O-phospho-L-threonyl-[protein] + ADP + H(+). Its function is as follows. Promotes K(+) uptake, by the potassium transporter TRK1-TRK2, which leads to the subsequent cellular resistance to toxic cations such as Na(+), Li(+) and Ca(2+). This Saccharomyces cerevisiae (strain ATCC 204508 / S288c) (Baker's yeast) protein is Serine/threonine-protein kinase HAL4/SAT4 (SAT4).